The sequence spans 254 residues: Transmembrane protein 70, mitochondrial (254 aa).

The N-terminal 78 residues, 1–78 (MLFLALGGPW…PVCWERGVRC (78 aa)), are a transit peptide targeting the mitochondrion. The Mitochondrial matrix portion of the chain corresponds to 79-112 (SHTQLDKSEDGRLIYTGNLARTVFGVKCFSYSTS). A helical membrane pass occupies residues 113 to 133 (LISLAFLPYIFAQNNVIFGSL). Residues 134 to 136 (PLQ) are Mitochondrial intermembrane-facing. The helical transmembrane segment at 137–157 (ILFYGTIGSFTVITPALLHFL) threads the bilayer. The Mitochondrial matrix portion of the chain corresponds to 158–254 (TKGYVIRLYH…SEKKQLKEEK (97 aa)).

The protein belongs to the TMEM70 family. As to quaternary structure, homooligomer. Interacts (homooligomer form) with ATP5MC1; this interaction facilitates the oligomer formation of subunit c/ATP5MC1 (c-ring) and the c-ring membrane insertion and also protects ATP5MC1 against intramitochondrial proteolysis. Interacts with the core subunits TMEM126B, NDUFAF1, ECSIT and ACAD9 of the MCIA complex. Interacts with ATP5MC3, TMEM242 and TIMMDC1.

It is found in the mitochondrion inner membrane. In terms of biological role, scaffold protein that participates in the c-ring assembly of mitochondrial ATP synthase (F(1)F(0) ATP synthase or complex V) by facilitating the membrane insertion and oligomer formation of the subunit c/ATP5MC1 through its interaction. Therefore, participates in the early stage of mitochondrial ATP synthase biogenesis and also protects subunit c/ATP5MC1 against intramitochondrial proteolysis. In addition, binds the mitochondrial proton-transporting ATP synthase complexes I and may play a role in the stability of its membrane-bound subassemblies. The polypeptide is Transmembrane protein 70, mitochondrial (Bos taurus (Bovine)).